A 399-amino-acid chain; its full sequence is Chorismate synthase (399 aa).

NADP(+)-binding residues include Arg-40 and Arg-46. Residues 129–131 (RSS), 257–258 (QA), Gly-302, 317–321 (KPISS), and Arg-343 each bind FMN.

The protein belongs to the chorismate synthase family. In terms of assembly, homotetramer. The cofactor is FMNH2.

The catalysed reaction is 5-O-(1-carboxyvinyl)-3-phosphoshikimate = chorismate + phosphate. It functions in the pathway metabolic intermediate biosynthesis; chorismate biosynthesis; chorismate from D-erythrose 4-phosphate and phosphoenolpyruvate: step 7/7. Its function is as follows. Catalyzes the anti-1,4-elimination of the C-3 phosphate and the C-6 proR hydrogen from 5-enolpyruvylshikimate-3-phosphate (EPSP) to yield chorismate, which is the branch point compound that serves as the starting substrate for the three terminal pathways of aromatic amino acid biosynthesis. This reaction introduces a second double bond into the aromatic ring system. In Chlorobium chlorochromatii (strain CaD3), this protein is Chorismate synthase.